We begin with the raw amino-acid sequence, 349 residues long: Glucose 1-dehydrogenase 1 (349 aa).

Zn(2+) is bound at residue cysteine 39. Residue threonine 41 participates in substrate binding. The Zn(2+) site is built by histidine 64 and glutamate 65. Substrate is bound by residues glutamate 110 and glutamate 146. Glutamate 146 provides a ligand contact to Zn(2+). NADP(+)-binding positions include alanine 178–isoleucine 181, leucine 260–valine 262, and serine 289–asparagine 291. Asparagine 291 contacts substrate.

The protein belongs to the zinc-containing alcohol dehydrogenase family. Glucose 1-dehydrogenase subfamily. Zn(2+) is required as a cofactor.

It catalyses the reaction D-glucose + NAD(+) = D-glucono-1,5-lactone + NADH + H(+). It carries out the reaction D-glucose + NADP(+) = D-glucono-1,5-lactone + NADPH + H(+). Functionally, catalyzes the NAD(P)(+)-dependent oxidation of D-glucose to D-gluconate via gluconolactone. Can utilize both NAD(+) and NADP(+) as electron acceptor. Is involved in the degradation of glucose through a non-phosphorylative variant of the Entner-Doudoroff pathway. This chain is Glucose 1-dehydrogenase 1, found in Caldivirga maquilingensis (strain ATCC 700844 / DSM 13496 / JCM 10307 / IC-167).